The chain runs to 344 residues: 2-aminoethylphosphonate--pyruvate transaminase (344 aa).

At lysine 194 the chain carries N6-(pyridoxal phosphate)lysine.

Belongs to the class-V pyridoxal-phosphate-dependent aminotransferase family. PhnW subfamily. Homodimer. Pyridoxal 5'-phosphate serves as cofactor.

It carries out the reaction (2-aminoethyl)phosphonate + pyruvate = phosphonoacetaldehyde + L-alanine. Functionally, involved in phosphonate degradation. The protein is 2-aminoethylphosphonate--pyruvate transaminase of Bacillus cereus.